Consider the following 278-residue polypeptide: MQFKSLLVSALAAASTALAQRSCGTPSPTEEQTEVAQRLQFNEENARVAGNATRLAPVTVNVYWHVIATSNSVSGGYLSQATLDKQLDVLNEAYAPHDIQFAQAGADWTINSNWASDRAELAMKRALRKGTYADLNVYFVPGTPYLGYAYFPTTVTTGSSAFYYDGVVILSDSVPGGSLSQYNLGHTATHEVGHWLGLYHTFEGYQCGGNGDYVSDTPFESEEAYGCEIGRDTCPSQAGDDPVTNYMDYSDDPCFTHFTTGQETRMHSYWTAYRASYQ.

Positions 1 to 19 (MQFKSLLVSALAAASTALA) are cleaved as a signal peptide. N51 carries an N-linked (GlcNAc...) asparagine glycan. Position 190 (H190) interacts with Zn(2+). The active site involves E191. Residue H194 coordinates Zn(2+). C227 and C254 are disulfide-bonded.

It belongs to the peptidase M43B family.

Its subcellular location is the secreted. Functionally, secreted metalloproteinase that allows assimilation of proteinaceous substrates. The chain is Extracellular metalloprotease GLRG_06511 from Colletotrichum graminicola (strain M1.001 / M2 / FGSC 10212) (Maize anthracnose fungus).